The primary structure comprises 97 residues: Putative pterin-4-alpha-carbinolamine dehydratase (97 aa).

The protein belongs to the pterin-4-alpha-carbinolamine dehydratase family.

It catalyses the reaction (4aS,6R)-4a-hydroxy-L-erythro-5,6,7,8-tetrahydrobiopterin = (6R)-L-erythro-6,7-dihydrobiopterin + H2O. The sequence is that of Putative pterin-4-alpha-carbinolamine dehydratase from Dinoroseobacter shibae (strain DSM 16493 / NCIMB 14021 / DFL 12).